The sequence spans 159 residues: RNA pyrophosphohydrolase (159 aa).

One can recognise a Nudix hydrolase domain in the interval 6–149; it reads GFRPNVGIIL…KREVYRRALK (144 aa). Positions 38 to 59 match the Nudix box motif; it reads GGINARETPEEALFRELNEEVG.

It belongs to the Nudix hydrolase family. RppH subfamily. A divalent metal cation is required as a cofactor.

In terms of biological role, accelerates the degradation of transcripts by removing pyrophosphate from the 5'-end of triphosphorylated RNA, leading to a more labile monophosphorylated state that can stimulate subsequent ribonuclease cleavage. The polypeptide is RNA pyrophosphohydrolase (Stutzerimonas stutzeri (strain A1501) (Pseudomonas stutzeri)).